A 508-amino-acid polypeptide reads, in one-letter code: ATP synthase subunit alpha, chloroplastic (508 aa).

170-177 (GDRQTGKT) serves as a coordination point for ATP.

This sequence belongs to the ATPase alpha/beta chains family. F-type ATPases have 2 components, F(1) - the catalytic core - and F(0) - the membrane proton channel. F(1) has five subunits: alpha(3), beta(3), gamma(1), delta(1), epsilon(1). F(0) has four main subunits: a(1), b(1), b'(1) and c(10-14). The alpha and beta chains form an alternating ring which encloses part of the gamma chain. F(1) is attached to F(0) by a central stalk formed by the gamma and epsilon chains, while a peripheral stalk is formed by the delta, b and b' chains.

Its subcellular location is the plastid. It is found in the chloroplast thylakoid membrane. The catalysed reaction is ATP + H2O + 4 H(+)(in) = ADP + phosphate + 5 H(+)(out). In terms of biological role, f(1)F(0) ATP synthase produces ATP from ADP in the presence of a proton or sodium gradient. F-type ATPases consist of two structural domains, F(1) containing the extramembraneous catalytic core and F(0) containing the membrane proton channel, linked together by a central stalk and a peripheral stalk. During catalysis, ATP synthesis in the catalytic domain of F(1) is coupled via a rotary mechanism of the central stalk subunits to proton translocation. Its function is as follows. The alpha chain is a regulatory subunit. The chain is ATP synthase subunit alpha, chloroplastic from Chlamydomonas reinhardtii (Chlamydomonas smithii).